Here is a 309-residue protein sequence, read N- to C-terminus: Aspartate carbamoyltransferase catalytic subunit (309 aa).

Positions 58 and 59 each coordinate carbamoyl phosphate. Lys87 provides a ligand contact to L-aspartate. Carbamoyl phosphate contacts are provided by Arg108, His136, and Gln139. Residues Arg168 and Arg229 each coordinate L-aspartate. Leu268 and Pro269 together coordinate carbamoyl phosphate.

This sequence belongs to the aspartate/ornithine carbamoyltransferase superfamily. ATCase family. In terms of assembly, heterooligomer of catalytic and regulatory chains.

The catalysed reaction is carbamoyl phosphate + L-aspartate = N-carbamoyl-L-aspartate + phosphate + H(+). It functions in the pathway pyrimidine metabolism; UMP biosynthesis via de novo pathway; (S)-dihydroorotate from bicarbonate: step 2/3. Catalyzes the condensation of carbamoyl phosphate and aspartate to form carbamoyl aspartate and inorganic phosphate, the committed step in the de novo pyrimidine nucleotide biosynthesis pathway. In Methanosarcina mazei (strain ATCC BAA-159 / DSM 3647 / Goe1 / Go1 / JCM 11833 / OCM 88) (Methanosarcina frisia), this protein is Aspartate carbamoyltransferase catalytic subunit.